A 198-amino-acid polypeptide reads, in one-letter code: Peptidyl-tRNA hydrolase (198 aa).

A tRNA-binding site is contributed by Tyr18. The Proton acceptor role is filled by His23. Residues Tyr69, Asn71, and Asn117 each contribute to the tRNA site.

The protein belongs to the PTH family. As to quaternary structure, monomer.

The protein localises to the cytoplasm. It carries out the reaction an N-acyl-L-alpha-aminoacyl-tRNA + H2O = an N-acyl-L-amino acid + a tRNA + H(+). In terms of biological role, hydrolyzes ribosome-free peptidyl-tRNAs (with 1 or more amino acids incorporated), which drop off the ribosome during protein synthesis, or as a result of ribosome stalling. Catalyzes the release of premature peptidyl moieties from peptidyl-tRNA molecules trapped in stalled 50S ribosomal subunits, and thus maintains levels of free tRNAs and 50S ribosomes. In Aeromonas hydrophila subsp. hydrophila (strain ATCC 7966 / DSM 30187 / BCRC 13018 / CCUG 14551 / JCM 1027 / KCTC 2358 / NCIMB 9240 / NCTC 8049), this protein is Peptidyl-tRNA hydrolase.